Reading from the N-terminus, the 233-residue chain is Purine nucleoside phosphorylase DeoD-type (233 aa).

Histidine 4 contacts a purine D-ribonucleoside. Phosphate contacts are provided by residues glycine 20, arginine 24, arginine 43, and 87–90 (RVGT). Residues 179-181 (EME) and 203-204 (SD) contribute to the a purine D-ribonucleoside site. Aspartate 204 (proton donor) is an active-site residue.

This sequence belongs to the PNP/UDP phosphorylase family. Homohexamer; trimer of homodimers.

The catalysed reaction is a purine D-ribonucleoside + phosphate = a purine nucleobase + alpha-D-ribose 1-phosphate. It carries out the reaction a purine 2'-deoxy-D-ribonucleoside + phosphate = a purine nucleobase + 2-deoxy-alpha-D-ribose 1-phosphate. Catalyzes the reversible phosphorolytic breakdown of the N-glycosidic bond in the beta-(deoxy)ribonucleoside molecules, with the formation of the corresponding free purine bases and pentose-1-phosphate. In Clostridium novyi (strain NT), this protein is Purine nucleoside phosphorylase DeoD-type.